We begin with the raw amino-acid sequence, 335 residues long: Phosphate acyltransferase (335 aa).

This sequence belongs to the PlsX family. In terms of assembly, homodimer. Probably interacts with PlsY.

It is found in the cytoplasm. The enzyme catalyses a fatty acyl-[ACP] + phosphate = an acyl phosphate + holo-[ACP]. It functions in the pathway lipid metabolism; phospholipid metabolism. Catalyzes the reversible formation of acyl-phosphate (acyl-PO(4)) from acyl-[acyl-carrier-protein] (acyl-ACP). This enzyme utilizes acyl-ACP as fatty acyl donor, but not acyl-CoA. The sequence is that of Phosphate acyltransferase from Alkaliphilus oremlandii (strain OhILAs) (Clostridium oremlandii (strain OhILAs)).